Here is a 765-residue protein sequence, read N- to C-terminus: 1,4-alpha-glucan branching enzyme GlgB (765 aa).

The active-site Nucleophile is the aspartate 431. Glutamate 484 functions as the Proton donor in the catalytic mechanism.

The protein belongs to the glycosyl hydrolase 13 family. GlgB subfamily. Monomer.

It catalyses the reaction Transfers a segment of a (1-&gt;4)-alpha-D-glucan chain to a primary hydroxy group in a similar glucan chain.. It participates in glycan biosynthesis; glycogen biosynthesis. Its function is as follows. Catalyzes the formation of the alpha-1,6-glucosidic linkages in glycogen by scission of a 1,4-alpha-linked oligosaccharide from growing alpha-1,4-glucan chains and the subsequent attachment of the oligosaccharide to the alpha-1,6 position. The chain is 1,4-alpha-glucan branching enzyme GlgB from Synechococcus sp. (strain CC9311).